The chain runs to 1041 residues: Isoleucine--tRNA ligase (1041 aa).

The short motif at 53–63 is the 'HIGH' region element; the sequence is PFANGLPHYGH. The 'KMSKS' region motif lies at 619–623; sequence KMSKS. Position 622 (lysine 622) interacts with ATP.

Belongs to the class-I aminoacyl-tRNA synthetase family. IleS type 2 subfamily. Monomer. Zn(2+) serves as cofactor.

Its subcellular location is the cytoplasm. It carries out the reaction tRNA(Ile) + L-isoleucine + ATP = L-isoleucyl-tRNA(Ile) + AMP + diphosphate. Its function is as follows. Catalyzes the attachment of isoleucine to tRNA(Ile). As IleRS can inadvertently accommodate and process structurally similar amino acids such as valine, to avoid such errors it has two additional distinct tRNA(Ile)-dependent editing activities. One activity is designated as 'pretransfer' editing and involves the hydrolysis of activated Val-AMP. The other activity is designated 'posttransfer' editing and involves deacylation of mischarged Val-tRNA(Ile). This chain is Isoleucine--tRNA ligase (ileS), found in Mycobacterium tuberculosis (strain CDC 1551 / Oshkosh).